Reading from the N-terminus, the 127-residue chain is Small ribosomal subunit protein bS6 (127 aa).

A disordered region spans residues 99–127; sequence PSPMMKEEKSKSMMPGDAAPAAPAETAAA. The segment covering 110-127 has biased composition (low complexity); sequence SMMPGDAAPAAPAETAAA.

It belongs to the bacterial ribosomal protein bS6 family.

Functionally, binds together with bS18 to 16S ribosomal RNA. The protein is Small ribosomal subunit protein bS6 of Dechloromonas aromatica (strain RCB).